Reading from the N-terminus, the 728-residue chain is Elongation factor 2 (728 aa).

The region spanning 19–261 is the tr-type G domain; it reads EHIRNIAIAA…MVCEHFPNPV (243 aa). Residues 28-35, 94-98, and 148-151 contribute to the GTP site; these read AHVDHGKT, DTPGH, and NKVD. Diphthamide is present on His-596.

It belongs to the TRAFAC class translation factor GTPase superfamily. Classic translation factor GTPase family. EF-G/EF-2 subfamily.

It localises to the cytoplasm. Catalyzes the GTP-dependent ribosomal translocation step during translation elongation. During this step, the ribosome changes from the pre-translocational (PRE) to the post-translocational (POST) state as the newly formed A-site-bound peptidyl-tRNA and P-site-bound deacylated tRNA move to the P and E sites, respectively. Catalyzes the coordinated movement of the two tRNA molecules, the mRNA and conformational changes in the ribosome. This chain is Elongation factor 2, found in Haloarcula marismortui (strain ATCC 43049 / DSM 3752 / JCM 8966 / VKM B-1809) (Halobacterium marismortui).